The following is a 413-amino-acid chain: Aspartate aminotransferase, cytoplasmic (413 aa).

The L-aspartate site is built by glycine 39 and tryptophan 141. Serine 149 carries the post-translational modification Phosphoserine. Position 195 (asparagine 195) interacts with L-aspartate. Position 259 is an N6-(pyridoxal phosphate)lysine (lysine 259). Lysine 318 is subject to N6-succinyllysine. Arginine 387 contacts L-aspartate.

It belongs to the class-I pyridoxal-phosphate-dependent aminotransferase family. In terms of assembly, homodimer. Pyridoxal 5'-phosphate is required as a cofactor. As to expression, expressed in neurons of the retina. Localizes to the inner and outer plexiform layers, the inner and outer nuclear layer and the outer segments of photoreceptors.

Its subcellular location is the cytoplasm. It carries out the reaction L-aspartate + 2-oxoglutarate = oxaloacetate + L-glutamate. The catalysed reaction is L-cysteine + 2-oxoglutarate = 2-oxo-3-sulfanylpropanoate + L-glutamate. The enzyme catalyses (2S)-2-aminobutanoate + 2-oxoglutarate = 2-oxobutanoate + L-glutamate. It catalyses the reaction 3-sulfino-L-alanine + 2-oxoglutarate = 3-sulfinopyruvate + L-glutamate. Its activity is regulated as follows. Inhibited by calcium ions. Functionally, biosynthesis of L-glutamate from L-aspartate or L-cysteine. Important regulator of levels of glutamate, the major excitatory neurotransmitter of the vertebrate central nervous system. Acts as a scavenger of glutamate in brain neuroprotection. The aspartate aminotransferase activity is involved in hepatic glucose synthesis during development and in adipocyte glyceroneogenesis. Using L-cysteine as substrate, regulates levels of mercaptopyruvate, an important source of hydrogen sulfide. Mercaptopyruvate is converted into H(2)S via the action of 3-mercaptopyruvate sulfurtransferase (3MST). Hydrogen sulfide is an important synaptic modulator and neuroprotectant in the brain. The chain is Aspartate aminotransferase, cytoplasmic from Mus musculus (Mouse).